The following is a 1823-amino-acid chain: Vitellogenin (1823 aa).

A signal peptide spans 1–14 (MWKLLLVALAFALA). Glutamine 17 bears the Pyrrolidone carboxylic acid mark. The 641-residue stretch at 18 to 658 (FQPGKVYRYS…SPSGPLPRAV (641 aa)) folds into the Vitellogenin domain. The segment at 953–986 (KGLISQQQQQPHHQQQPHQHGQDQARAAYQRPWA) is disordered. Positions 958–976 (QQQQQPHHQQQPHQHGQDQ) are enriched in low complexity. N-linked (GlcNAc...) asparagine glycosylation is present at asparagine 1097. Residues 1119–1289 (SDKDKDAKKP…SSSSSESKSL (171 aa)) are disordered. Low complexity-rich tracts occupy residues 1128–1149 (PPGS…SSSD) and 1178–1192 (SSSS…SDSS). The span at 1194 to 1206 (SPHKHGGAKRQHA) shows a compositional bias: basic residues. Low complexity-rich tracts occupy residues 1217–1238 (SHSS…KSFS) and 1253–1286 (SSSS…SSES). N-linked (GlcNAc...) asparagine glycosylation occurs at asparagine 1298. The disordered stretch occupies residues 1308–1351 (VPQRKPQTSRRHTPASSSSSSSSSSSSSSSSSSSDSDMTVSAES). Residues 1323 to 1344 (SSSSSSSSSSSSSSSSSSSDSD) show a composition bias toward low complexity. In terms of domain architecture, VWFD spans 1564–1732 (SACELNEQSL…SWIAPDETCG (169 aa)). Disulfide bonds link cysteine 1566–cysteine 1695 and cysteine 1589–cysteine 1731. The N-linked (GlcNAc...) asparagine glycan is linked to asparagine 1675.

Post-translationally, what corresponds to phosvitin in other species is lost during maturation of vitellogenin to lipovitellin. In terms of tissue distribution, produced by the liver, secreted into the blood and then sequestered by receptor mediated endocytosis into growing oocytes, where it is generally cleaved, giving rise to the respective yolk components lipovitellins 1 and 2.

Precursor of the major egg-yolk proteins that are sources of nutrients during early development of oviparous organisms. This Ichthyomyzon unicuspis (Silver lamprey) protein is Vitellogenin.